We begin with the raw amino-acid sequence, 463 residues long: Nuclear hormone receptor family member nhr-79 (463 aa).

The nuclear receptor DNA-binding region spans 3-81; the sequence is RGKCMVCDSP…AGMMRDLVQA (79 aa). NR C4-type zinc fingers lie at residues 6 to 27 and 43 to 64; these read CMVC…CKAC and CLGD…CRHC. The segment at 83-119 is disordered; the sequence is REIKSDKGKNSRNSSQSEDFFSPPPEQPGPSNYFDQF. The 261-residue stretch at 203–463 folds into the NR LBD domain; sequence YTEQVINLNM…ILKDMLKFQY (261 aa).

This sequence belongs to the nuclear hormone receptor family.

The protein localises to the nucleus. In terms of biological role, orphan nuclear receptor. In Caenorhabditis elegans, this protein is Nuclear hormone receptor family member nhr-79 (nhr-79).